Here is a 346-residue protein sequence, read N- to C-terminus: N-acetyl-gamma-glutamyl-phosphate reductase (346 aa).

Residue C149 is part of the active site.

This sequence belongs to the NAGSA dehydrogenase family. Type 1 subfamily.

It localises to the cytoplasm. It catalyses the reaction N-acetyl-L-glutamate 5-semialdehyde + phosphate + NADP(+) = N-acetyl-L-glutamyl 5-phosphate + NADPH + H(+). Its pathway is amino-acid biosynthesis; L-arginine biosynthesis; N(2)-acetyl-L-ornithine from L-glutamate: step 3/4. Catalyzes the NADPH-dependent reduction of N-acetyl-5-glutamyl phosphate to yield N-acetyl-L-glutamate 5-semialdehyde. The polypeptide is N-acetyl-gamma-glutamyl-phosphate reductase (Oceanobacillus iheyensis (strain DSM 14371 / CIP 107618 / JCM 11309 / KCTC 3954 / HTE831)).